Reading from the N-terminus, the 612-residue chain is MAAPEGSGLGEDARLDQETAQWLRWDKNSLTLEAVKRLIAEGNKEELRKCFGARMEFGTAGLRAAMGPGISRMNDLTIIQTTQGFCRYLEKQFSDLKQKGIVISFDARAHPSSGGSSRRFARLAATTFISQGIPVYLFSDITPTPFVPFTVSHLKLCAGIMITASHNPKQDNGYKVYWDNGAQIISPHDKGISQAIEENLEPWPQAWDDSLIDSSPLLHNPSASINNDYFEDLKKYCFHRSVNRETKVKFVHTSVHGVGHSFVQSAFKAFDLVPPEAVPEQKDPDPEFPTVKYPNPEEGKGVLTLSFALADKTKARIVLANDPDADRLAVAEKQDSGEWRVFSGNELGALLGWWLFTSWKEKNQDRSALKDTYMLSSTVSSKILRAIALKEGFHFEETLTGFKWMGNRAKQLIDQGKTVLFAFEEAIGYMCCPFVLDKDGVSAAVISAELASFLATKNLSLSQQLKAIYVEYGYHITKASYFICHDQETIKKLFENLRNYDGKNNYPKACGKFEISAIRDLTTGYDDSQPDKKAVLPTSKSSQMITFTFANGGVATMRTSGTEPKIKYYAELCAPPGNSDPEQLKKELNELVSAIEEHFFQPQKYNLQPKAD.

Position 2 is an N-acetylalanine (Ala-2). Residues Arg-63 and Ser-165 each contribute to the alpha-D-glucose 1,6-bisphosphate site. Ser-165 (phosphoserine intermediate) is an active-site residue. Mg(2+) contacts are provided by Ser-165, Asp-322, Asp-324, and Asp-326. Ser-165 bears the Phosphoserine mark. Alpha-D-glucose 1,6-bisphosphate is bound by residues Asp-326, Arg-327, Thr-400, Glu-424, and Lys-438.

This sequence belongs to the phosphohexose mutase family. As to quaternary structure, monomer. Requires Mg(2+) as cofactor.

It localises to the cytoplasm. It is found in the cytosol. The catalysed reaction is alpha-D-ribose 1-phosphate = D-ribose 5-phosphate. It carries out the reaction 2-deoxy-alpha-D-ribose 1-phosphate = 2-deoxy-D-ribose 5-phosphate. The enzyme catalyses alpha-D-glucose 1-phosphate = alpha-D-glucose 6-phosphate. It catalyses the reaction O-phospho-L-seryl-[protein] + alpha-D-glucose 1-phosphate = alpha-D-glucose 1,6-bisphosphate + L-seryl-[protein]. The catalysed reaction is alpha-D-glucose 1,6-bisphosphate + L-seryl-[protein] = O-phospho-L-seryl-[protein] + alpha-D-glucose 6-phosphate. The phosphomutase activity is stimulated by glucose 1,6-bisphosphate. Functionally, catalyzes the conversion of the nucleoside breakdown products ribose-1-phosphate and deoxyribose-1-phosphate to the corresponding 5-phosphopentoses. Catalyzes the reversible isomerization of alpha-D-glucose 1-phosphate to alpha-D-glucose 6-phosphate but with a lower catalytic efficiency. The mechanism proceeds via the intermediate compound alpha-D-glucose 1,6-bisphosphate. In vitro, also has a low glucose 1,6-bisphosphate synthase activity which is most probably not physiologically relevant. This chain is Phosphopentomutase, found in Homo sapiens (Human).